The primary structure comprises 549 residues: Ankyrin repeat domain-containing protein SOWAHA (549 aa).

The signal sequence occupies residues 1–17; it reads MALAAAAAAAAAGVSQA. 2 disordered regions span residues 82–219 and 235–256; these read KPRP…PCML and EEPG…PLLL. The segment covering 203 to 216 has biased composition (low complexity); that stretch reads PGPGAAKGPPQQKP. The segment covering 235 to 248 has biased composition (basic and acidic residues); it reads EEPGLRRQLSEEPS. Serine 260 carries the phosphoserine modification. ANK repeat units lie at residues 345-374 and 384-414; these read SGFT…RSGA and GGYT…QVHV. Residues 513 to 549 form a disordered region; that stretch reads PRKKTKIRGGLPAFSEISRRPTPGPLAGLVPSLPPTT.

The protein belongs to the SOWAH family.

The protein is Ankyrin repeat domain-containing protein SOWAHA (SOWAHA) of Homo sapiens (Human).